The sequence spans 156 residues: Ribosome maturation factor RimP (156 aa).

It belongs to the RimP family.

The protein localises to the cytoplasm. Functionally, required for maturation of 30S ribosomal subunits. This is Ribosome maturation factor RimP from Bacillus thuringiensis (strain Al Hakam).